Reading from the N-terminus, the 441-residue chain is Ribulose bisphosphate carboxylase large chain (441 aa).

Lys-5 carries the post-translational modification N6,N6,N6-trimethyllysine. Substrate is bound by residues Asn-114 and Thr-164. The active-site Proton acceptor is the Lys-166. Lys-168 is a binding site for substrate. Positions 192, 194, and 195 each coordinate Mg(2+). Lys-192 carries the post-translational modification N6-carboxylysine. The active-site Proton acceptor is His-285. Arg-286, His-318, and Ser-370 together coordinate substrate.

It belongs to the RuBisCO large chain family. Type I subfamily. As to quaternary structure, heterohexadecamer of 8 large chains and 8 small chains; disulfide-linked. The disulfide link is formed within the large subunit homodimers. Mg(2+) serves as cofactor. In terms of processing, the disulfide bond which can form in the large chain dimeric partners within the hexadecamer appears to be associated with oxidative stress and protein turnover.

The protein resides in the plastid. Its subcellular location is the chloroplast. It carries out the reaction 2 (2R)-3-phosphoglycerate + 2 H(+) = D-ribulose 1,5-bisphosphate + CO2 + H2O. The catalysed reaction is D-ribulose 1,5-bisphosphate + O2 = 2-phosphoglycolate + (2R)-3-phosphoglycerate + 2 H(+). Functionally, ruBisCO catalyzes two reactions: the carboxylation of D-ribulose 1,5-bisphosphate, the primary event in carbon dioxide fixation, as well as the oxidative fragmentation of the pentose substrate in the photorespiration process. Both reactions occur simultaneously and in competition at the same active site. The polypeptide is Ribulose bisphosphate carboxylase large chain (Pellaea andromedifolia (Coffee fern)).